Reading from the N-terminus, the 804-residue chain is Lon protease 2 (804 aa).

The Lon N-terminal domain occupies 6 to 199 (MPVCPVRGSV…AVLVLLEAEL (194 aa)). 362–369 (GPPGVGKT) contacts ATP. Residues 598 to 779 (EPQVGVATGM…DQVLDLALVG (182 aa)) form the Lon proteolytic domain. Active-site residues include serine 685 and lysine 728.

This sequence belongs to the peptidase S16 family. As to quaternary structure, homohexamer. Organized in a ring with a central cavity.

Its subcellular location is the cytoplasm. The catalysed reaction is Hydrolysis of proteins in presence of ATP.. In terms of biological role, ATP-dependent serine protease that mediates the selective degradation of mutant and abnormal proteins as well as certain short-lived regulatory proteins. Required for cellular homeostasis and for survival from DNA damage and developmental changes induced by stress. Degrades polypeptides processively to yield small peptide fragments that are 5 to 10 amino acids long. Binds to DNA in a double-stranded, site-specific manner. This is Lon protease 2 from Thermus thermophilus (strain ATCC BAA-163 / DSM 7039 / HB27).